A 530-amino-acid chain; its full sequence is PTS system maltose-specific EIICB component (530 aa).

Residues 1-431 (MTAKTAPKVT…FNLKTPGRDS (431 aa)) enclose the PTS EIIC type-1 domain. The next 10 helical transmembrane spans lie at 22–42 (FMLP…GSSL), 69–89 (IGSF…PLGL), 96–116 (VAAF…NFWL), 138–158 (ILGI…GIIV), 189–209 (LVMG…AMGI), 289–309 (FLSQ…ALAM), 321–341 (IKGL…TEPL), 343–363 (FLFL…TGLG), 369–389 (VLGV…VFGI), and 399–419 (MVPV…RFAI). In terms of domain architecture, PTS EIIB type-1 spans 449-530 (GYNVPAILEA…MAGLMHTVQA (82 aa)). Cysteine 471 (phosphocysteine intermediate; for EIIB activity) is an active-site residue.

It localises to the cell inner membrane. The enzyme catalyses D-maltose(out) + N(pros)-phospho-L-histidyl-[protein] = alpha-maltose 6'-phosphate(in) + L-histidyl-[protein]. Functionally, the phosphoenolpyruvate-dependent sugar phosphotransferase system (sugar PTS), a major carbohydrate active transport system, catalyzes the phosphorylation of incoming sugar substrates concomitantly with their translocation across the cell membrane. This system is involved in maltose transport. MalX can also recognize and transport glucose even though this sugar may not represent the natural substrate of the system. In Escherichia coli (strain K12), this protein is PTS system maltose-specific EIICB component.